Consider the following 113-residue polypeptide: Retrotransposon Gag-like protein 8 (113 aa).

It belongs to the FAM127 family.

The sequence is that of Retrotransposon Gag-like protein 8 (RTL8A) from Bos taurus (Bovine).